The sequence spans 807 residues: Ecotropic viral integration site 5 ortholog (807 aa).

A disordered region spans residues 1 to 31 (MTLTTTTTASSAESQAKMDVKGGALPGEENL). Threonine 33 bears the Phosphothreonine mark. 2 positions are modified to phosphoserine: serine 58 and serine 64. One can recognise a Rab-GAP TBC domain in the interval 116–300 (GIPHHFRAIV…RIMDVFLSEG (185 aa)). Coiled-coil stretches lie at residues 352-463 (SIKL…ENNV), 494-583 (CLLE…ENQR), and 627-772 (REME…RGKF).

In terms of assembly, interacts with Rab11.

The protein localises to the cytoplasm. It localises to the endosome. Functionally, functions as a GTPase-activating protein (GAP). During border cell migration in the ovary, acts as a GAP for Rab11 and is necessary for the maintenance of active receptor tyrosine kinases at the leading edge. The polypeptide is Ecotropic viral integration site 5 ortholog (Evi5) (Drosophila melanogaster (Fruit fly)).